The primary structure comprises 172 residues: Probable tryptophan transport protein (172 aa).

Transmembrane regions (helical) follow at residues Val-7–Gly-29, Val-49–Ala-71, Ala-104–Val-126, and Phe-136–Val-158.

This sequence belongs to the vitamin uptake transporter (VUT/ECF) (TC 2.A.88) family. TrpP subfamily.

It localises to the cell membrane. Its function is as follows. Probably involved in tryptophan uptake. In Bacillus subtilis (strain 168), this protein is Probable tryptophan transport protein (trpP).